A 140-amino-acid polypeptide reads, in one-letter code: MSERDKLYHVLLDRLYAKLPKKDLASETQTLPTLSIINVGNTTIIRNFSEYCDRIRREDKICMRYLLKELAAAGSISENGQLMIQGKFSNAIVNTFMDRFLKTYVQCSTCKSLDTVLVKDKKIWYIQCLACGAKNPVKPL.

Belongs to the eIF-2-beta/eIF-5 family. Heterotrimer composed of an alpha, a beta and a gamma chain.

Functionally, eIF-2 functions in the early steps of protein synthesis by forming a ternary complex with GTP and initiator tRNA. The polypeptide is Translation initiation factor 2 subunit beta (Metallosphaera sedula (strain ATCC 51363 / DSM 5348 / JCM 9185 / NBRC 15509 / TH2)).